A 213-amino-acid chain; its full sequence is dTTP/UTP pyrophosphatase (213 aa).

The active-site Proton acceptor is Asp92.

It belongs to the Maf family. YhdE subfamily. Requires a divalent metal cation as cofactor.

It localises to the cytoplasm. It catalyses the reaction dTTP + H2O = dTMP + diphosphate + H(+). The enzyme catalyses UTP + H2O = UMP + diphosphate + H(+). In terms of biological role, nucleoside triphosphate pyrophosphatase that hydrolyzes dTTP and UTP. May have a dual role in cell division arrest and in preventing the incorporation of modified nucleotides into cellular nucleic acids. The chain is dTTP/UTP pyrophosphatase from Granulibacter bethesdensis (strain ATCC BAA-1260 / CGDNIH1).